A 452-amino-acid chain; its full sequence is Isocitrate dehydrogenase [NADP], mitochondrial (452 aa).

Residues 1–39 (MAGYLRVVRSLCRASGSGSAWAPAALTAPNLQEQPRRHY) constitute a mitochondrion transit peptide. An N6-acetyllysine mark is found at Lys45, Lys48, Lys67, and Lys69. N6-acetyllysine; alternate occurs at positions 80 and 106. An N6-succinyllysine; alternate mark is found at Lys80 and Lys106. Residues 115–117 (TIT) and Arg122 contribute to the NADP(+) site. Thr117 contacts D-threo-isocitrate. Residues 134-140 (SPNGTIR) and Arg149 each bind D-threo-isocitrate. Lys155 is subject to N6-acetyllysine. Lys166 carries the post-translational modification N6-acetyllysine; alternate. Lys166 carries the post-translational modification N6-succinyllysine; alternate. Arg172 contacts D-threo-isocitrate. Residues Lys180 and Lys193 each carry the N6-acetyllysine; alternate modification. N6-succinyllysine; alternate is present on residues Lys180 and Lys193. Lys199 carries the post-translational modification N6-acetyllysine. N6-acetyllysine; alternate is present on Lys256. At Lys256 the chain carries N6-succinyllysine; alternate. Lys263, Lys272, Lys275, and Lys280 each carry N6-acetyllysine. An N6-acetyllysine; alternate modification is found at Lys282. Lys282 is modified (N6-succinyllysine; alternate). Asp291 contributes to the Mn(2+) binding site. Residue Lys299 coordinates NADP(+). Asp314 contacts Mn(2+). NADP(+) contacts are provided by residues 349–354 (GTVTRH) and Asn367. Lys384 carries the post-translational modification N6-acetyllysine; alternate. Lys384 carries the N6-succinyllysine; alternate modification. An N6-acetyllysine mark is found at Lys400, Lys413, and Lys442.

The protein belongs to the isocitrate and isopropylmalate dehydrogenases family. Homodimer. Mg(2+) is required as a cofactor. It depends on Mn(2+) as a cofactor. In terms of processing, acetylation at Lys-413 dramatically reduces catalytic activity. Deacetylated by SIRT3.

It localises to the mitochondrion. The catalysed reaction is D-threo-isocitrate + NADP(+) = 2-oxoglutarate + CO2 + NADPH. Its function is as follows. Plays a role in intermediary metabolism and energy production. It may tightly associate or interact with the pyruvate dehydrogenase complex. The chain is Isocitrate dehydrogenase [NADP], mitochondrial (IDH2) from Bos taurus (Bovine).